A 506-amino-acid polypeptide reads, in one-letter code: Parthenolide synthase (506 aa).

The chain crosses the membrane as a helical span at residues 10–30 (LFLPTLCTILISYIIIKYVLI). 5 N-linked (GlcNAc...) asparagine glycosylation sites follow: Asn32, Asn63, Asn121, Asn168, and Asn175. Residues 301-321 (LLLNVLLGAIDTTFTTIVWAM) form a helical membrane-spanning segment. Cys448 lines the heme pocket.

It belongs to the cytochrome P450 family.

It localises to the membrane. It catalyses the reaction (+)-costunolide + reduced [NADPH--hemoprotein reductase] + O2 = parthenolide + oxidized [NADPH--hemoprotein reductase] + H2O + H(+). Its pathway is secondary metabolite biosynthesis; terpenoid biosynthesis. Functionally, involved in the biosynthesis of germacrene-derived sesquiterpene lactones. Component of the parthenolide biosynthetic pathway; parthenolide and conjugates are promising anti-cancer drugs highly active against colon cancer cells. Catalyzes the conversion of costunolide to parthenolide. The chain is Parthenolide synthase from Tanacetum parthenium (Feverfew).